A 273-amino-acid chain; its full sequence is Dermonecrotic toxin LapSicTox-alphaIB1bi (273 aa).

His-5 is an active-site residue. Positions 25 and 27 each coordinate Mg(2+). The Nucleophile role is filled by His-41. 2 disulfide bridges follow: Cys-45–Cys-51 and Cys-47–Cys-190. Asp-85 is a Mg(2+) binding site. 2 N-linked (GlcNAc...) asparagine glycosylation sites follow: Asn-189 and Asn-250.

Belongs to the arthropod phospholipase D family. Class II subfamily. It depends on Mg(2+) as a cofactor. Expressed by the venom gland.

The protein localises to the secreted. It catalyses the reaction an N-(acyl)-sphingosylphosphocholine = an N-(acyl)-sphingosyl-1,3-cyclic phosphate + choline. It carries out the reaction an N-(acyl)-sphingosylphosphoethanolamine = an N-(acyl)-sphingosyl-1,3-cyclic phosphate + ethanolamine. The enzyme catalyses a 1-acyl-sn-glycero-3-phosphocholine = a 1-acyl-sn-glycero-2,3-cyclic phosphate + choline. The catalysed reaction is a 1-acyl-sn-glycero-3-phosphoethanolamine = a 1-acyl-sn-glycero-2,3-cyclic phosphate + ethanolamine. In terms of biological role, dermonecrotic toxins cleave the phosphodiester linkage between the phosphate and headgroup of certain phospholipids (sphingolipid and lysolipid substrates), forming an alcohol (often choline) and a cyclic phosphate. This toxin acts on sphingomyelin (SM). It may also act on ceramide phosphoethanolamine (CPE), lysophosphatidylcholine (LPC) and lysophosphatidylethanolamine (LPE), but not on lysophosphatidylserine (LPS), and lysophosphatidylglycerol (LPG). It acts by transphosphatidylation, releasing exclusively cyclic phosphate products as second products. Induces dermonecrosis, hemolysis, increased vascular permeability, edema, inflammatory response, and platelet aggregation. The polypeptide is Dermonecrotic toxin LapSicTox-alphaIB1bi (Loxosceles apachea (Apache recluse spider)).